Reading from the N-terminus, the 309-residue chain is Methionyl-tRNA formyltransferase (309 aa).

A (6S)-5,6,7,8-tetrahydrofolate-binding site is contributed by 112-115; the sequence is SLLP.

This sequence belongs to the Fmt family.

It carries out the reaction L-methionyl-tRNA(fMet) + (6R)-10-formyltetrahydrofolate = N-formyl-L-methionyl-tRNA(fMet) + (6S)-5,6,7,8-tetrahydrofolate + H(+). Functionally, attaches a formyl group to the free amino group of methionyl-tRNA(fMet). The formyl group appears to play a dual role in the initiator identity of N-formylmethionyl-tRNA by promoting its recognition by IF2 and preventing the misappropriation of this tRNA by the elongation apparatus. The sequence is that of Methionyl-tRNA formyltransferase from Bartonella bacilliformis (strain ATCC 35685 / KC583 / Herrer 020/F12,63).